Reading from the N-terminus, the 565-residue chain is MAPKTLAERLAELEDPTPKDFDPEDLERAGPDSDDEGNEAADPNAGREHYQAVGKARLRRQDPINLGKQYAGSKISREALEAESDDDPFRPRSSDEEEDSEDEEEEDSELGSDEDEDASEESEEERPQRSRTSAKDSKRQRKESQVSSDEKDGEGMDTDGSEETEGSEDDSEDGFDEDDMSGEFSSDDDQEGDEDGDDDEDEDEETDNRKVRFQETSKSDDREELRRLMSSDQKTIAATISQAAKADAAKGRAVKQQRATFDALLNARIKLQKGLTAINRLSVTTKGSDETPSIDGEAIKSAESAALALWSTLEDLRLALADAQTQDESKKRKRPSAVSVATSTDSLWKRMTDLESDAVPHRRTVLDKWSLKVRGSTAALPNARGKLLGASASSQQTISAVIDAQVASETGDRAAKRRRHSSDEGPEPVYDDTVFYQSLLRDLVEQRMSSSDAITNGIDTLHLQLPSRQGIHPITGMRKDKVKRDVDTRASKGRKMRFDVHEKLQNFMAPEDRGTWTITAREEFFASLLGKTASGLLREGDDEDASAAEESDEDREEVGLRLFRS.

Positions 1 to 31 (MAPKTLAERLAELEDPTPKDFDPEDLERAGP) are enriched in basic and acidic residues. Disordered regions lie at residues 1 to 225 (MAPK…REEL), 404 to 430 (AQVASETGDRAAKRRRHSSDEGPEPVY), and 537 to 565 (LREGDDEDASAAEESDEDREEVGLRLFRS). A compositionally biased stretch (acidic residues) spans 95-124 (DEEEDSEDEEEEDSELGSDEDEDASEESEE). The span at 125–154 (ERPQRSRTSAKDSKRQRKESQVSSDEKDGE) shows a compositional bias: basic and acidic residues. A compositionally biased stretch (acidic residues) spans 155 to 206 (GMDTDGSEETEGSEDDSEDGFDEDDMSGEFSSDDDQEGDEDGDDDEDEDEET). Residues 207-225 (DNRKVRFQETSKSDDREEL) show a composition bias toward basic and acidic residues. The segment covering 540-556 (GDDEDASAAEESDEDRE) has biased composition (acidic residues).

The protein belongs to the AATF family.

The protein resides in the nucleus. It is found in the nucleolus. This is Protein bfr2 (bfr2) from Aspergillus fumigatus (strain ATCC MYA-4609 / CBS 101355 / FGSC A1100 / Af293) (Neosartorya fumigata).